We begin with the raw amino-acid sequence, 1866 residues long: Rho GTPase-activating protein 100F (1866 aa).

3 disordered regions span residues 22–98 (MLCC…AGVK), 262–336 (RRGN…NNYS), and 466–530 (LRSS…DTEA). Residues 59 to 77 (GNQQHHGNQQHHGNQQQHH) are compositionally biased toward low complexity. The PDZ domain maps to 179-264 (LVEIVKRPGQ…LVLAIRQRRG (86 aa)). The segment covering 271–286 (PGPPTLSRPEQKPPPV) has biased composition (pro residues). Residues 301 to 326 (TDRMPRPRSSRDRRTGDGREMTESRS) show a composition bias toward basic and acidic residues. The residue at position 719 (S719) is a Phosphoserine. A disordered region spans residues 745–775 (AGPASPSGSILSTGGHQSPAPTPSATLPRPH). A compositionally biased stretch (polar residues) spans 750–760 (PSGSILSTGGH). Positions 789-908 (KLDKPIVDIG…LRQSPLHQLA (120 aa)) constitute a C2 domain. A Rho-GAP domain is found at 948 to 1148 (ADLETVVNRE…YLLQIWPQPQ (201 aa)). Disordered stretches follow at residues 1273–1328 (GGSV…QVKI), 1356–1380 (PTTQ…RRGN), 1393–1479 (SVVN…DLVS), 1514–1607 (FTPI…MVST), 1644–1727 (YTND…YGTL), and 1819–1840 (DEKP…ADKG). Residues 1282–1292 (DPSPLPLPGTP) show a composition bias toward pro residues. The segment covering 1293-1302 (SPGSSSASTG) has biased composition (low complexity). Composition is skewed to polar residues over residues 1356–1377 (PTTQ…TASR), 1393–1408 (SVVN…YTGS), and 1416–1429 (GNSS…NASG). The span at 1443 to 1479 (SSATSSSSSSQATVLSAGSTATSAPTTSSDDSDDLVS) shows a compositional bias: low complexity. Polar residues predominate over residues 1538–1587 (QLVTPISGSSSKPGATTGAISKYTTGSVESSINANSQKLSSPSRLCNSKD). Composition is skewed to low complexity over residues 1590–1607 (SRTG…MVST) and 1644–1658 (YTND…SSKS). Over residues 1659 to 1670 (GIGGGSGTGLGA) the composition is skewed to gly residues. Composition is skewed to low complexity over residues 1671 to 1688 (VSGA…LFGS) and 1696 to 1720 (GSSH…NHNT). Residues 1830-1839 (HGEEKLGADK) show a composition bias toward basic and acidic residues.

Interacts (via PDZ domain) with Nrx-1; may recruit Nrx-1 to the presynaptic active zone.

It localises to the presynapse. In terms of biological role, GTPase activator for the Rho-type GTPases by converting them to an inactive GDP-bound state. Promotes the anchoring of Liprin-alpha clusters at synapses. Recruits and keeps Nrx-1 levels high in active zones in the presynapse opposite the postsynaptic region. The chain is Rho GTPase-activating protein 100F (RhoGAP100F) from Drosophila melanogaster (Fruit fly).